The sequence spans 367 residues: Folliculin-like protein bhd1 (367 aa).

Disordered regions lie at residues 41 to 75 and 92 to 115; these read RSIG…QSST and SKGP…SPIS. The span at 54 to 64 shows a compositional bias: basic and acidic residues; the sequence is EAFKNELDNRN. Composition is skewed to polar residues over residues 65-75 and 99-115; these read NADSQSLQSST and RVNS…SPIS. One can recognise a uDENN FLCN/SMCR8-type domain in the interval 131–302; sequence FSVPDVQPRL…SNIGTAPSYE (172 aa).

It belongs to the folliculin family.

The protein localises to the nucleus. Its subcellular location is the cytoplasm. This Schizosaccharomyces pombe (strain 972 / ATCC 24843) (Fission yeast) protein is Folliculin-like protein bhd1 (bhd1).